A 422-amino-acid chain; its full sequence is ATP phosphoribosyltransferase regulatory subunit (422 aa).

Belongs to the class-II aminoacyl-tRNA synthetase family. HisZ subfamily. Heteromultimer composed of HisG and HisZ subunits.

The protein localises to the cytoplasm. The protein operates within amino-acid biosynthesis; L-histidine biosynthesis; L-histidine from 5-phospho-alpha-D-ribose 1-diphosphate: step 1/9. Functionally, required for the first step of histidine biosynthesis. May allow the feedback regulation of ATP phosphoribosyltransferase activity by histidine. The protein is ATP phosphoribosyltransferase regulatory subunit of Clostridium botulinum (strain Langeland / NCTC 10281 / Type F).